Here is a 256-residue protein sequence, read N- to C-terminus: Geranylgeranylglyceryl phosphate synthase (256 aa).

The Mg(2+) site is built by Asp28 and Ser53. Sn-glycerol 1-phosphate-binding positions include Tyr172–Gly178, Gly203–Gly204, and Gly225–Thr226.

It belongs to the GGGP/HepGP synthase family. Group II subfamily. Mg(2+) is required as a cofactor.

It localises to the cytoplasm. It catalyses the reaction sn-glycerol 1-phosphate + (2E,6E,10E)-geranylgeranyl diphosphate = sn-3-O-(geranylgeranyl)glycerol 1-phosphate + diphosphate. It participates in membrane lipid metabolism; glycerophospholipid metabolism. Its function is as follows. Prenyltransferase that catalyzes the transfer of the geranylgeranyl moiety of geranylgeranyl diphosphate (GGPP) to the C3 hydroxyl of sn-glycerol-1-phosphate (G1P). This reaction is the first ether-bond-formation step in the biosynthesis of archaeal membrane lipids. The sequence is that of Geranylgeranylglyceryl phosphate synthase from Methanococcus maripaludis (strain C7 / ATCC BAA-1331).